Here is a 423-residue protein sequence, read N- to C-terminus: Gamma-glutamyl phosphate reductase (423 aa).

Belongs to the gamma-glutamyl phosphate reductase family.

It localises to the cytoplasm. The enzyme catalyses L-glutamate 5-semialdehyde + phosphate + NADP(+) = L-glutamyl 5-phosphate + NADPH + H(+). It participates in amino-acid biosynthesis; L-proline biosynthesis; L-glutamate 5-semialdehyde from L-glutamate: step 2/2. Catalyzes the NADPH-dependent reduction of L-glutamate 5-phosphate into L-glutamate 5-semialdehyde and phosphate. The product spontaneously undergoes cyclization to form 1-pyrroline-5-carboxylate. The sequence is that of Gamma-glutamyl phosphate reductase from Burkholderia ambifaria (strain MC40-6).